Reading from the N-terminus, the 438-residue chain is UDP-N-acetylglucosamine 1-carboxyvinyltransferase 1 (438 aa).

22–23 (KN) lines the phosphoenolpyruvate pocket. UDP-N-acetyl-alpha-D-glucosamine is bound at residue arginine 95. The active-site Proton donor is cysteine 119. Residue cysteine 119 is modified to 2-(S-cysteinyl)pyruvic acid O-phosphothioketal. Residues 124–128 (RPIDL), aspartate 307, and valine 329 each bind UDP-N-acetyl-alpha-D-glucosamine.

This sequence belongs to the EPSP synthase family. MurA subfamily.

It is found in the cytoplasm. It catalyses the reaction phosphoenolpyruvate + UDP-N-acetyl-alpha-D-glucosamine = UDP-N-acetyl-3-O-(1-carboxyvinyl)-alpha-D-glucosamine + phosphate. It participates in cell wall biogenesis; peptidoglycan biosynthesis. Its function is as follows. Cell wall formation. Adds enolpyruvyl to UDP-N-acetylglucosamine. This Lactiplantibacillus plantarum (strain ATCC BAA-793 / NCIMB 8826 / WCFS1) (Lactobacillus plantarum) protein is UDP-N-acetylglucosamine 1-carboxyvinyltransferase 1.